The primary structure comprises 197 residues: Imidazoleglycerol-phosphate dehydratase (197 aa).

It belongs to the imidazoleglycerol-phosphate dehydratase family.

It is found in the cytoplasm. It catalyses the reaction D-erythro-1-(imidazol-4-yl)glycerol 3-phosphate = 3-(imidazol-4-yl)-2-oxopropyl phosphate + H2O. It functions in the pathway amino-acid biosynthesis; L-histidine biosynthesis; L-histidine from 5-phospho-alpha-D-ribose 1-diphosphate: step 6/9. This is Imidazoleglycerol-phosphate dehydratase from Pseudomonas fluorescens (strain Pf0-1).